We begin with the raw amino-acid sequence, 351 residues long: Photosystem II D2 protein (351 aa).

A helical transmembrane segment spans residues 39 to 59; that stretch reads CAYLALGAWFTGTTFVSSWYT. His-116 serves as a coordination point for chlorophyll a. A helical membrane pass occupies residues 123–139; it reads GFCLRQFEIARLVGLRP. Residues Gln-128 and Asn-141 each contribute to the pheophytin a site. Residues 151–164 traverse the membrane as a helical segment; it reads VFVSVFLLYPLGQA. His-196 serves as a coordination point for chlorophyll a. Residues 206 to 226 form a helical membrane-spanning segment; it reads GALLCAIHGATVENTLFEDGE. The a plastoquinone site is built by His-213 and Phe-260. Position 213 (His-213) interacts with Fe cation. His-267 is a binding site for Fe cation. The helical transmembrane segment at 277–293 threads the bilayer; the sequence is GLWVSSIGIVGLALNLR.

This sequence belongs to the reaction center PufL/M/PsbA/D family. As to quaternary structure, PSII is composed of 1 copy each of membrane proteins PsbA, PsbB, PsbC, PsbD, PsbE, PsbF, PsbH, PsbI, PsbJ, PsbK, PsbL, PsbM, PsbT, PsbY, PsbZ, Psb30/Ycf12, at least 3 peripheral proteins of the oxygen-evolving complex and a large number of cofactors. It forms dimeric complexes. It depends on The D1/D2 heterodimer binds P680, chlorophylls that are the primary electron donor of PSII, and subsequent electron acceptors. It shares a non-heme iron and each subunit binds pheophytin, quinone, additional chlorophylls, carotenoids and lipids. There is also a Cl(-1) ion associated with D1 and D2, which is required for oxygen evolution. The PSII complex binds additional chlorophylls, carotenoids and specific lipids. as a cofactor.

The protein localises to the plastid. The protein resides in the chloroplast thylakoid membrane. It catalyses the reaction 2 a plastoquinone + 4 hnu + 2 H2O = 2 a plastoquinol + O2. Photosystem II (PSII) is a light-driven water:plastoquinone oxidoreductase that uses light energy to abstract electrons from H(2)O, generating O(2) and a proton gradient subsequently used for ATP formation. It consists of a core antenna complex that captures photons, and an electron transfer chain that converts photonic excitation into a charge separation. The D1/D2 (PsbA/PsbD) reaction center heterodimer binds P680, the primary electron donor of PSII as well as several subsequent electron acceptors. D2 is needed for assembly of a stable PSII complex. This Cyanidium caldarium (Red alga) protein is Photosystem II D2 protein.